A 330-amino-acid chain; its full sequence is Fructose-1,6-bisphosphatase class 1 (330 aa).

The Mg(2+) site is built by Glu-84, Asp-103, Leu-105, and Asp-106. Residues 106-109, Asn-196, and Lys-262 each bind substrate; that span reads DGSS. Glu-268 is a Mg(2+) binding site.

This sequence belongs to the FBPase class 1 family. Homotetramer. Mg(2+) is required as a cofactor.

The protein localises to the cytoplasm. The catalysed reaction is beta-D-fructose 1,6-bisphosphate + H2O = beta-D-fructose 6-phosphate + phosphate. It participates in carbohydrate biosynthesis; gluconeogenesis. In Shewanella baltica (strain OS185), this protein is Fructose-1,6-bisphosphatase class 1.